The following is a 345-amino-acid chain: Protein lifeguard 1 (345 aa).

The interval 1 to 115 (MSHEKSFLVS…GNYQEEGPPS (115 aa)) is disordered. 2 stretches are compositionally biased toward pro residues: residues 24–46 (APMPPYVQAPYPGAPYPQAPFQP) and 79–98 (GPYPQSPFPPNPYGQPPPFQ). The next 7 helical transmembrane spans lie at 139-159 (VFLVLTLQLSVTLSTVAIFTF), 171-191 (VWTYYVSYAIFFISLIVLSCC), 202-222 (LVALSILTVSLSYMVGMIASF), 227-247 (AVIMAVGITTAVCFTVVIFSM), 257-277 (MGVLLVSVVVLFIFAILCIFI), 281-301 (ILEIVYASLGALLFTCFLAVD), and 320-340 (FAALNLYTDIINIFLYILTII).

The protein belongs to the BI1 family. LFG subfamily.

It is found in the membrane. Potential apoptotic regulator. This is Protein lifeguard 1 (Grina) from Mus musculus (Mouse).